The primary structure comprises 495 residues: Cytochrome P450 monooxygenase BOA4 (495 aa).

The helical transmembrane segment at 12 to 31 (LANSNTVIAGCIVFALYYLF) threads the bilayer. Residue asparagine 115 is glycosylated (N-linked (GlcNAc...) asparagine). Residue cysteine 439 participates in heme binding.

Belongs to the cytochrome P450 family. Heme serves as cofactor.

It is found in the membrane. The protein operates within polyketide biosynthesis. Cytochrome P450 monooxygenase; part of the gene cluster A that mediates the biosynthesis of botcinic acid and its botcinin derivatives, acetate-derived polyketides that contribute to virulence when combined with the sesquiterpene botrydial. Botcinic acid and its derivatives have been shown to induce chlorosis and necrosis during host plant infection, but also have antifungal activities. Two polyketide synthases, BOA6 and BOA9, are involved in the biosynthesis of botcinins. BOA6 mediates the formation of the per-methylated tetraketide core by condensation of four units of malonyl-CoA with one unit of acetyl-CoA, which would be methylated in activated methylene groups to yield a bicyclic acid intermediate that could then either be converted to botrylactone derivatives or lose the starter acetate unit through a retro-Claisen type C-C bond cleavage to yield botcinin derivatives. The second polyketide synthase, BOA9, is probably required for the biosynthesis of the tetraketide side chain of botcinins. The methyltransferase (MT) domain within BOA6 is probably responsible for the incorporation of four methyl groups. The trans-enoyl reductase BOA5 might take over the enoyl reductase function of BOA6 that misses an ER domain. The monooxygenases BOA2, BOA3 and BOA4 might be involved in further hydroxylations at C4, C5 and C8, whereas BOA7, close to BOA9, could potentially be involved in the hydroxylation at C4 in the side chain of botcinins. The sequence is that of Cytochrome P450 monooxygenase BOA4 from Botryotinia fuckeliana (strain B05.10) (Noble rot fungus).